The sequence spans 505 residues: MSAKIKADEISAIIKERIENFDLSVDVEETGKVISVADGVANVYGLKNIMAGEMVEFEGGEKGMALNLEESSVGIVILGKTSGITEGSSVKRLKKLLRVPVGDALIGRVVNSLGEPIDAKGPIEATETRFVEEKAKGIMARKSVHEPLQTGIKAIDALVPIGRGQRELIIGDRQTGKTTVAIDTIINQKGQDVICIYVAIGQKQSTVAQVVKKLEEYGAMDYTIVVNAGASDTAALQYLAPYAGVTMGEYFRDNSRHALIIYDDLSKHAVAYREMSLILRRPPGREAYPGDVFYLHSRLLERASKLNDALGAGSLTALPIIETQAGDVSAYIPTNVISITDGQIFLESDLFNSGIRPAINVGLSVSRVGGAAQIKATKQVSGNLRLDLAQYRELQAFAQFASDLDESSRKQLERGQKMVEVLKQPPYSPLPVENQVVIIFAGSKGYLDDIAAASVTKFEAELYPYIEAKYPEIFEQIRTKKVLDKEIEELLHKALKDFKATFSVA.

171-178 (GDRQTGKT) serves as a coordination point for ATP.

This sequence belongs to the ATPase alpha/beta chains family. In terms of assembly, F-type ATPases have 2 components, CF(1) - the catalytic core - and CF(0) - the membrane proton channel. CF(1) has five subunits: alpha(3), beta(3), gamma(1), delta(1), epsilon(1). CF(0) has three main subunits: a(1), b(2) and c(9-12). The alpha and beta chains form an alternating ring which encloses part of the gamma chain. CF(1) is attached to CF(0) by a central stalk formed by the gamma and epsilon chains, while a peripheral stalk is formed by the delta and b chains.

Its subcellular location is the cell inner membrane. The catalysed reaction is ATP + H2O + 4 H(+)(in) = ADP + phosphate + 5 H(+)(out). Its function is as follows. Produces ATP from ADP in the presence of a proton gradient across the membrane. The alpha chain is a regulatory subunit. In Campylobacter curvus (strain 525.92), this protein is ATP synthase subunit alpha.